The sequence spans 378 residues: Chaperone protein DnaJ (378 aa).

A J domain is found at 5 to 70; it reads DYYEVLGVAK…QKRAAYDQYG (66 aa). Residues 138-216 form a CR-type zinc finger; the sequence is GYDTQIRVPS…CHGSGKVKET (79 aa). Positions 151, 154, 168, 171, 190, 193, 204, and 207 each coordinate Zn(2+). CXXCXGXG motif repeat units lie at residues 151–158, 168–175, 190–197, and 204–211; these read CEVCHGSG, CPTCHGQG, CPKCHGTG, and CVHCHGSG.

This sequence belongs to the DnaJ family. In terms of assembly, homodimer. Requires Zn(2+) as cofactor.

The protein localises to the cytoplasm. Participates actively in the response to hyperosmotic and heat shock by preventing the aggregation of stress-denatured proteins and by disaggregating proteins, also in an autonomous, DnaK-independent fashion. Unfolded proteins bind initially to DnaJ; upon interaction with the DnaJ-bound protein, DnaK hydrolyzes its bound ATP, resulting in the formation of a stable complex. GrpE releases ADP from DnaK; ATP binding to DnaK triggers the release of the substrate protein, thus completing the reaction cycle. Several rounds of ATP-dependent interactions between DnaJ, DnaK and GrpE are required for fully efficient folding. Also involved, together with DnaK and GrpE, in the DNA replication of plasmids through activation of initiation proteins. This Burkholderia lata (strain ATCC 17760 / DSM 23089 / LMG 22485 / NCIMB 9086 / R18194 / 383) protein is Chaperone protein DnaJ.